The sequence spans 100 residues: Small ribosomal subunit protein uS14c (100 aa).

This sequence belongs to the universal ribosomal protein uS14 family. As to quaternary structure, part of the 30S ribosomal subunit.

It localises to the plastid. The protein localises to the chloroplast. Binds 16S rRNA, required for the assembly of 30S particles. The chain is Small ribosomal subunit protein uS14c from Pyropia yezoensis (Susabi-nori).